Here is a 256-residue protein sequence, read N- to C-terminus: L-tyrosine degradation gene cluster protein hmgX (256 aa).

It belongs to the TTC36 family.

The protein resides in the cytoplasm. In terms of biological role, part of the L-tyrosine degradation gene cluster that mediates the biosynthesis of the brownish pigment pyomelanin as an alternative melanin. The 4-hydroxyphenylpyruvate dioxygenase hppD catalyzes the conversion of 4-hydroxyphenylpyruvate to homogentisic acid (HGA). The protein hmgX is crucial for this conversion and thus, probably functions as an accessory factor to mediate specific activity of hppD. The homogentisate 1,2-dioxygenase hmgA is then involved in the cleavage of the aromatic ring of HGA and its conversion to 4-maleylacetoacetate. When hmgA activity is lowered by the cell wall integrity (CWI) signaling pathway, HGA accumulates and leads to the production of pyomelanin through benzoquinone acetic acid after oxidation and polymerization. On the opposite, in non-stress conditions, both hppD and hmgA activities are balanced and HGA is degraded into 4-maleylacetoacetate. 4-maleylacetoacetate is further converted to 4-fumarylacetoacetate by the maleylacetoacetate isomerase maiA, which is degraded into fumarate and acetoacetate by the fumarylacetoacetase fahA. The protein is L-tyrosine degradation gene cluster protein hmgX of Aspergillus fumigatus (strain ATCC MYA-4609 / CBS 101355 / FGSC A1100 / Af293) (Neosartorya fumigata).